We begin with the raw amino-acid sequence, 319 residues long: Transcription elongation factor A protein 1 (319 aa).

The 78-residue stretch at 1–78 (MQEIIKCREQ…DKWKQDIEGT (78 aa)) folds into the TFIIS N-terminal domain. The segment covering 78–106 (TSATTTSSSSSSSSSTTSTTTTKTASPSE) has biased composition (low complexity). The disordered stretch occupies residues 78–146 (TSATTTSSSS…TTPKTSSPPI (69 aa)). Residues 107 to 122 (SLKRKSISEDTSDRPT) show a composition bias toward basic and acidic residues. The segment covering 133–146 (ISPPTTPKTSSPPI) has biased composition (low complexity). The TFIIS central domain maps to 160-272 (LRNKTIQLFV…ASMLGQNNEA (113 aa)). The TFIIS-type zinc finger occupies 275–317 (DQFQCGKCKQRKCTYTQLQTRSADEPPTTFVKCCVKGCGNRWR). 4 residues coordinate Zn(2+): Cys279, Cys282, Cys307, and Cys312.

It belongs to the TFS-II family.

It is found in the nucleus. Necessary for efficient RNA polymerase II transcription elongation past template-encoded arresting sites. The arresting sites in DNA have the property of trapping a certain fraction of elongating RNA polymerases that pass through, resulting in locked ternary complexes. Cleavage of the nascent transcript by S-II allows the resumption of elongation from the new 3'-terminus. The sequence is that of Transcription elongation factor A protein 1 (tcea1) from Dictyostelium discoideum (Social amoeba).